The primary structure comprises 359 residues: Putative nucleotidyltransferase MAB21L1 (359 aa).

Residues 23 to 24 and 63 to 66 contribute to the a ribonucleoside 5'-triphosphate site; these read RK and FEGL. Residues Glu73 and Glu75 each contribute to the Mg(2+) site. A ribonucleoside 5'-triphosphate is bound by residues Lys248 and 252-255; that span reads SLLK.

This sequence belongs to the mab-21 family. Monomer. Homodecamer; composed of 2 back to back homopentamers. The protein may exist as monomer in solution and oiligomerizes upon ligand binding.

The protein resides in the nucleus. Putative nucleotidyltransferase required for several aspects of embryonic development including normal development of the eye. It is unclear whether it displays nucleotidyltransferase activity in vivo. Binds single-stranded RNA (ssRNA). In Danio rerio (Zebrafish), this protein is Putative nucleotidyltransferase MAB21L1 (mab21l1).